The sequence spans 307 residues: MGSTMEPPGGAYLHLGAVTSPVGTARMLQLAFGCTTFSLVAHRGGFGGVQGTFCMAAWGFCFAFSVLVVACEFTKLHSCLRLSWGNFTAAFAMLATLLCATAAVIYPLYFTRLECPPEPAGCMVRNFRLAASVFAGLLFLAYAAEVALTRARPGQVASYMATVSGLLKIVQAFVACIIFGALVHESRYGRYVATQWCVAVYSLCFMATVAVVVLSVMGHTAGLGCPFDRLVIVYTFLAVLLYLSAAVIWPVFCFDPKYGEPGRPADCLRGSCPWDSQLVVAIFTYVNLLLYIVDLAYSQRIRFVPTL.

MARVEL domains follow at residues 17-154 and 159-303; these read AVTS…ARPG and YMAT…RIRF. 7 helical membrane passes run 53–73, 90–110, 129–149, 163–183, 198–218, 232–252, and 278–298; these read FCMA…ACEF, AFAM…PLYF, LAAS…VALT, VSGL…GALV, VAVY…SVMG, IVYT…WPVF, and LVVA…LAYS.

The protein belongs to the MAL family.

The protein localises to the membrane. This chain is Myeloid-associated differentiation marker-like protein 2 (Myadml2), found in Mus musculus (Mouse).